Here is a 109-residue protein sequence, read N- to C-terminus: Large ribosomal subunit protein uL24 (109 aa).

This sequence belongs to the universal ribosomal protein uL24 family. In terms of assembly, part of the 50S ribosomal subunit.

One of two assembly initiator proteins, it binds directly to the 5'-end of the 23S rRNA, where it nucleates assembly of the 50S subunit. Functionally, one of the proteins that surrounds the polypeptide exit tunnel on the outside of the subunit. The sequence is that of Large ribosomal subunit protein uL24 from Rickettsia africae (strain ESF-5).